A 170-amino-acid chain; its full sequence is tRNA-splicing endonuclease (170 aa).

Catalysis depends on residues Tyr110, His116, and Lys147.

Belongs to the tRNA-intron endonuclease family. Archaeal short subfamily. In terms of assembly, homotetramer; although the tetramer contains four active sites, only two participate in the cleavage. Therefore, it should be considered as a dimer of dimers.

The catalysed reaction is pretRNA = a 3'-half-tRNA molecule with a 5'-OH end + a 5'-half-tRNA molecule with a 2',3'-cyclic phosphate end + an intron with a 2',3'-cyclic phosphate and a 5'-hydroxyl terminus.. Its function is as follows. Endonuclease that removes tRNA introns. Cleaves pre-tRNA at the 5'- and 3'-splice sites to release the intron. The products are an intron and two tRNA half-molecules bearing 2',3' cyclic phosphate and 5'-OH termini. Recognizes a pseudosymmetric substrate in which 2 bulged loops of 3 bases are separated by a stem of 4 bp. The polypeptide is tRNA-splicing endonuclease (Pyrococcus furiosus (strain ATCC 43587 / DSM 3638 / JCM 8422 / Vc1)).